A 500-amino-acid chain; its full sequence is Glucose-6-phosphate isomerase (500 aa).

Catalysis depends on glutamate 332, which acts as the Proton donor. Residues histidine 363 and lysine 473 contribute to the active site.

It belongs to the GPI family.

The protein resides in the cytoplasm. The catalysed reaction is alpha-D-glucose 6-phosphate = beta-D-fructose 6-phosphate. It participates in carbohydrate biosynthesis; gluconeogenesis. It functions in the pathway carbohydrate degradation; glycolysis; D-glyceraldehyde 3-phosphate and glycerone phosphate from D-glucose: step 2/4. Functionally, catalyzes the reversible isomerization of glucose-6-phosphate to fructose-6-phosphate. The chain is Glucose-6-phosphate isomerase from Rhizorhabdus wittichii (strain DSM 6014 / CCUG 31198 / JCM 15750 / NBRC 105917 / EY 4224 / RW1) (Sphingomonas wittichii).